The sequence spans 365 residues: tRNA/tmRNA (uracil-C(5))-methyltransferase (365 aa).

Q189, Y217, N222, E238, and D298 together coordinate S-adenosyl-L-methionine. The active-site Nucleophile is C323. Residue E357 is the Proton acceptor of the active site.

It belongs to the class I-like SAM-binding methyltransferase superfamily. RNA M5U methyltransferase family. TrmA subfamily.

The enzyme catalyses uridine(54) in tRNA + S-adenosyl-L-methionine = 5-methyluridine(54) in tRNA + S-adenosyl-L-homocysteine + H(+). It catalyses the reaction uridine(341) in tmRNA + S-adenosyl-L-methionine = 5-methyluridine(341) in tmRNA + S-adenosyl-L-homocysteine + H(+). Functionally, dual-specificity methyltransferase that catalyzes the formation of 5-methyluridine at position 54 (m5U54) in all tRNAs, and that of position 341 (m5U341) in tmRNA (transfer-mRNA). In Shewanella loihica (strain ATCC BAA-1088 / PV-4), this protein is tRNA/tmRNA (uracil-C(5))-methyltransferase.